The sequence spans 414 residues: Cyclic di-GMP phosphodiesterase PA4108 (414 aa).

In terms of domain architecture, HD-GYP spans 133–330 (ISASVLRHPN…YPVGALVRLE (198 aa)). His-160, His-192, Asp-193, His-221, His-246, and His-247 together coordinate a divalent metal cation.

As to quaternary structure, monomer.

The enzyme catalyses 3',3'-c-di-GMP + 2 H2O = 2 GMP + 2 H(+). Its activity is regulated as follows. Activated by Mg(2+) and Mn(2+). Phosphodiesterase (PDE) that catalyzes the hydrolysis of cyclic diguanylate (c-di-GMP) to GMP. Hydrolyzes c-di-GMP to GMP in a two-step reaction, via the linear intermediate 5'-phosphoguanylyl(3'-&gt;5')guanosine (pGpG). In vitro, can use pGpG as an alternative substrate and hydrolyze it into GMP. Acts in regulation of motility, synthesis of virulence determinants and biofilm architecture. The protein is Cyclic di-GMP phosphodiesterase PA4108 of Pseudomonas aeruginosa (strain ATCC 15692 / DSM 22644 / CIP 104116 / JCM 14847 / LMG 12228 / 1C / PRS 101 / PAO1).